The following is a 455-amino-acid chain: DENN domain-containing protein 11 (455 aa).

Val-2 bears the N-acetylvaline mark. The 173-residue stretch at 15–187 (EGPAVSVPQD…QLEMPGHYSH (173 aa)) folds into the uDENN domain. The segment at 21–61 (VPQDPALQAGGWVRGGSGGGRVAAEAPRRREPEEPAPPEVL) is disordered. A compositionally biased stretch (gly residues) spans 32 to 41 (WVRGGSGGGR). Arg-41 is subject to Omega-N-methylarginine. The cDENN domain occupies 214 to 362 (WLPSIHRYMY…LNSADREKYR (149 aa)). One can recognise a dDENN domain in the interval 364–455 (LNEQRQMLLY…MLVIDNPCCP (92 aa)).

Belongs to the DENND11 family. Expressed within the somatodendritic compartment of neurons, is also present on dendritic growth cones, but is not found in astrocytes.

Functionally, probable guanine nucleotide exchange factor (GEF). May promote the exchange of GDP to GTP, converting inactive GDP-bound small GTPases into their active GTP-bound form. May play a role in neuritogenesis, as well as in neuronal recovery and/or restructuring in the hippocampus following transient cerebral ischemia. The protein is DENN domain-containing protein 11 (Dennd11) of Rattus norvegicus (Rat).